We begin with the raw amino-acid sequence, 154 residues long: Low molecular weight protein-tyrosine-phosphatase PtpA (154 aa).

The active-site Nucleophile is Cys-8. The active site involves Arg-14. Asp-120 acts as the Proton donor in catalysis.

Belongs to the low molecular weight phosphotyrosine protein phosphatase family. In terms of assembly, interacts with host CORO1A. In terms of processing, phosphorylations at Tyr-122 and Tyr-123 are essential for phosphatase activity.

The protein resides in the secreted. The enzyme catalyses O-phospho-L-tyrosyl-[protein] + H2O = L-tyrosyl-[protein] + phosphate. Secreted tyrosine phosphatase that plays a critical role during infection as a bacterial effector protein that counteracts host defenses. Required for intramacrophage survival. This chain is Low molecular weight protein-tyrosine-phosphatase PtpA (ptpA), found in Staphylococcus aureus (strain bovine RF122 / ET3-1).